Here is a 929-residue protein sequence, read N- to C-terminus: Alanine--tRNA ligase (929 aa).

Zn(2+) is bound by residues His619, His623, Cys722, and His726.

It belongs to the class-II aminoacyl-tRNA synthetase family. The cofactor is Zn(2+).

It is found in the cytoplasm. The catalysed reaction is tRNA(Ala) + L-alanine + ATP = L-alanyl-tRNA(Ala) + AMP + diphosphate. Catalyzes the attachment of alanine to tRNA(Ala) in a two-step reaction: alanine is first activated by ATP to form Ala-AMP and then transferred to the acceptor end of tRNA(Ala). Also edits incorrectly charged Ser-tRNA(Ala) and Gly-tRNA(Ala) via its editing domain. The chain is Alanine--tRNA ligase from Halobacterium salinarum (strain ATCC 29341 / DSM 671 / R1).